Consider the following 464-residue polypeptide: DNA primase DnaG (464 aa).

The 75-residue stretch at Asp198–Glu272 folds into the Toprim domain. Mg(2+)-binding residues include Glu204, Asp246, and Asp248. The segment covering Arg315–Val333 has biased composition (basic and acidic residues). Residues Arg315–Thr351 form a disordered region.

Belongs to the archaeal DnaG primase family. As to quaternary structure, forms a ternary complex with MCM helicase and DNA. Component of the archaeal exosome complex. Mg(2+) is required as a cofactor.

It catalyses the reaction ssDNA + n NTP = ssDNA/pppN(pN)n-1 hybrid + (n-1) diphosphate.. Its function is as follows. RNA polymerase that catalyzes the synthesis of short RNA molecules used as primers for DNA polymerase during DNA replication. Also part of the exosome, which is a complex involved in RNA degradation. Acts as a poly(A)-binding protein that enhances the interaction between heteromeric, adenine-rich transcripts and the exosome. This Thermococcus kodakarensis (strain ATCC BAA-918 / JCM 12380 / KOD1) (Pyrococcus kodakaraensis (strain KOD1)) protein is DNA primase DnaG.